The primary structure comprises 739 residues: Cellulose synthase catalytic subunit [UDP-forming] (739 aa).

4 helical membrane-spanning segments follow: residues 36–55, 59–76, 83–101, and 116–138; these read VLVV…IISA, LYSQ…VLVL, LAIL…RYMF, and MFFG…FGYV. Positions 157–250 are catalytic subdomain A; it reads EWPTVDVFIP…YIALFDADHV (94 aa). The active site involves aspartate 199. Positions 246 and 248 each coordinate substrate. A catalytic subdomain B region spans residues 327-387; it reads EPLLEIGGVA…NQRIRWARGM (61 aa). Aspartate 343 is an active-site residue. Transmembrane regions (helical) follow at residues 417 to 436, 440 to 462, 524 to 546, and 551 to 573; these read FFYG…YLIF, IFHA…SSLT, PYLV…LIWG, and AVTV…AAVA. The PilZ domain maps to 580–677; the sequence is QVRSEPRVSA…QSELVRLTFS (98 aa).

The protein belongs to the glycosyltransferase 2 family. It depends on Mg(2+) as a cofactor.

The protein resides in the cell inner membrane. The enzyme catalyses [(1-&gt;4)-beta-D-glucosyl](n) + UDP-alpha-D-glucose = [(1-&gt;4)-beta-D-glucosyl](n+1) + UDP + H(+). Its pathway is glycan metabolism; bacterial cellulose biosynthesis. Its activity is regulated as follows. Activated by bis-(3'-5') cyclic diguanylic acid (c-di-GMP). Functionally, catalytic subunit of cellulose synthase. It polymerizes uridine 5'-diphosphate glucose to cellulose, which is produced as an extracellular component responsible for the structural integrity and rigidity of self-supporting mats characteristic of the 'wrinkly spreader' phenotype. This is Cellulose synthase catalytic subunit [UDP-forming] (bcsA) from Pseudomonas fluorescens (strain SBW25).